Here is a 76-residue protein sequence, read N- to C-terminus: Omega-conotoxin-like TxO5 (76 aa).

The N-terminal stretch at 1-22 (MKLTCMMIVAVLFLTAWTFVTA) is a signal peptide. The propeptide occupies 23-48 (ITSNGLENLFPKAHHEMKNPEASKLN). 3 cysteine pairs are disulfide-bonded: C51-C66, C58-C70, and C65-C75.

Belongs to the conotoxin O1 superfamily. As to expression, expressed by the venom duct.

It is found in the secreted. Omega-conotoxins act at presynaptic membranes, they bind and block voltage-gated calcium channels (Cav). The polypeptide is Omega-conotoxin-like TxO5 (Conus textile (Cloth-of-gold cone)).